The sequence spans 291 residues: 4-hydroxy-tetrahydrodipicolinate synthase (291 aa).

T45 serves as a coordination point for pyruvate. The active-site Proton donor/acceptor is the Y133. K161 acts as the Schiff-base intermediate with substrate in catalysis. Pyruvate is bound at residue I203.

Belongs to the DapA family. As to quaternary structure, homotetramer.

Its subcellular location is the cytoplasm. It carries out the reaction L-aspartate 4-semialdehyde + pyruvate = (2S,4S)-4-hydroxy-2,3,4,5-tetrahydrodipicolinate + H2O + H(+). Its pathway is amino-acid biosynthesis; L-lysine biosynthesis via DAP pathway; (S)-tetrahydrodipicolinate from L-aspartate: step 3/4. With respect to regulation, is allosterically feedback inhibited by lysine; the N.meningitidis enzyme is significantly more sensitive to lysine than the E.coli enzyme. Shows substrate inhibition by (S)-ASA, with a Ki of 1.7 mM. Catalyzes the condensation of (S)-aspartate-beta-semialdehyde [(S)-ASA] and pyruvate to 4-hydroxy-tetrahydrodipicolinate (HTPA). The polypeptide is 4-hydroxy-tetrahydrodipicolinate synthase (Neisseria meningitidis serogroup B (strain ATCC BAA-335 / MC58)).